The primary structure comprises 537 residues: Spore coat protein SP70 (537 aa).

Positions 1 to 20 (MRILKLAALSCLLFIAPSLS) are cleaved as a signal peptide. The region spanning 21-140 (INCDGLSKDQ…CQIPATGGGP (120 aa)) is the DSCP-N domain. N-linked (GlcNAc...) asparagine glycosylation occurs at Asn-97. The Follistatin-like 1 domain occupies 157–179 (SCDKVNCPNGYICTIVNQLAVCV). Positions 183–246 (SSSSSSSSTT…GSHTTTGGST (64 aa)) are disordered. 4 consecutive Follistatin-like domains span residues 250-272 (TCGN…AVCV), 278-296 (SCAN…GECI), 358-380 (TCKT…PTCV), and 389-415 (TCKD…EECC).

Phosphorylated and fucosylated.

This chain is Spore coat protein SP70 (cotB), found in Dictyostelium discoideum (Social amoeba).